Reading from the N-terminus, the 614-residue chain is Dihydroxy-acid dehydratase (614 aa).

Aspartate 81 serves as a coordination point for Mg(2+). Residue cysteine 122 participates in [2Fe-2S] cluster binding. Mg(2+) is bound by residues aspartate 123 and lysine 124. The residue at position 124 (lysine 124) is an N6-carboxylysine. A [2Fe-2S] cluster-binding site is contributed by cysteine 193. Residue glutamate 489 coordinates Mg(2+). The Proton acceptor role is filled by serine 515.

Belongs to the IlvD/Edd family. As to quaternary structure, homodimer. It depends on [2Fe-2S] cluster as a cofactor. Mg(2+) is required as a cofactor.

It carries out the reaction (2R)-2,3-dihydroxy-3-methylbutanoate = 3-methyl-2-oxobutanoate + H2O. The catalysed reaction is (2R,3R)-2,3-dihydroxy-3-methylpentanoate = (S)-3-methyl-2-oxopentanoate + H2O. The protein operates within amino-acid biosynthesis; L-isoleucine biosynthesis; L-isoleucine from 2-oxobutanoate: step 3/4. It functions in the pathway amino-acid biosynthesis; L-valine biosynthesis; L-valine from pyruvate: step 3/4. Functions in the biosynthesis of branched-chain amino acids. Catalyzes the dehydration of (2R,3R)-2,3-dihydroxy-3-methylpentanoate (2,3-dihydroxy-3-methylvalerate) into 2-oxo-3-methylpentanoate (2-oxo-3-methylvalerate) and of (2R)-2,3-dihydroxy-3-methylbutanoate (2,3-dihydroxyisovalerate) into 2-oxo-3-methylbutanoate (2-oxoisovalerate), the penultimate precursor to L-isoleucine and L-valine, respectively. This is Dihydroxy-acid dehydratase from Cellvibrio japonicus (strain Ueda107) (Pseudomonas fluorescens subsp. cellulosa).